The sequence spans 460 residues: UDP-N-acetylmuramate--L-alanine ligase (460 aa).

ATP is bound at residue 118–124 (GTHGKTT).

It belongs to the MurCDEF family.

It is found in the cytoplasm. It catalyses the reaction UDP-N-acetyl-alpha-D-muramate + L-alanine + ATP = UDP-N-acetyl-alpha-D-muramoyl-L-alanine + ADP + phosphate + H(+). The protein operates within cell wall biogenesis; peptidoglycan biosynthesis. Cell wall formation. In Gloeobacter violaceus (strain ATCC 29082 / PCC 7421), this protein is UDP-N-acetylmuramate--L-alanine ligase.